The following is an 874-amino-acid chain: Probable inorganic carbon transporter subunit DabA (874 aa).

Zn(2+) is bound by residues cysteine 398, aspartate 400, histidine 580, and cysteine 595.

This sequence belongs to the inorganic carbon transporter (TC 9.A.2) DabA family. Forms a complex with DabB. Zn(2+) is required as a cofactor.

It is found in the cell membrane. Its function is as follows. Part of an energy-coupled inorganic carbon pump. The polypeptide is Probable inorganic carbon transporter subunit DabA (Bacillus anthracis (strain A0248)).